Here is a 458-residue protein sequence, read N- to C-terminus: tRNA modification GTPase MnmE (458 aa).

(6S)-5-formyl-5,6,7,8-tetrahydrofolate contacts are provided by arginine 22, glutamate 84, and arginine 123. A TrmE-type G domain is found at 220–379; sequence GIATAIIGRP…LEKAIADLFF (160 aa). Asparagine 230 lines the K(+) pocket. Residues 230-235, 249-255, and 274-277 contribute to the GTP site; these read NVGKSS, TDIAGTT, and DTAG. Serine 234 serves as a coordination point for Mg(2+). K(+) contacts are provided by threonine 249, isoleucine 251, and threonine 254. Mg(2+) is bound at residue threonine 255. Lysine 458 is a binding site for (6S)-5-formyl-5,6,7,8-tetrahydrofolate.

Belongs to the TRAFAC class TrmE-Era-EngA-EngB-Septin-like GTPase superfamily. TrmE GTPase family. As to quaternary structure, homodimer. Heterotetramer of two MnmE and two MnmG subunits. Requires K(+) as cofactor.

It is found in the cytoplasm. In terms of biological role, exhibits a very high intrinsic GTPase hydrolysis rate. Involved in the addition of a carboxymethylaminomethyl (cmnm) group at the wobble position (U34) of certain tRNAs, forming tRNA-cmnm(5)s(2)U34. In Bacillus cereus (strain ATCC 14579 / DSM 31 / CCUG 7414 / JCM 2152 / NBRC 15305 / NCIMB 9373 / NCTC 2599 / NRRL B-3711), this protein is tRNA modification GTPase MnmE.